We begin with the raw amino-acid sequence, 160 residues long: Protein shisa-like-2B (160 aa).

The chain crosses the membrane as a helical span at residues 65-85 (IGALIGLGIAALVLLAFVISV).

It belongs to the shisa family.

The protein localises to the membrane. The polypeptide is Protein shisa-like-2B (Homo sapiens (Human)).